A 1357-amino-acid chain; its full sequence is DNA-directed RNA polymerase subunit beta (1357 aa).

It belongs to the RNA polymerase beta chain family. The RNAP catalytic core consists of 2 alpha, 1 beta, 1 beta' and 1 omega subunit. When a sigma factor is associated with the core the holoenzyme is formed, which can initiate transcription.

It catalyses the reaction RNA(n) + a ribonucleoside 5'-triphosphate = RNA(n+1) + diphosphate. DNA-dependent RNA polymerase catalyzes the transcription of DNA into RNA using the four ribonucleoside triphosphates as substrates. In Pseudomonas fluorescens (strain SBW25), this protein is DNA-directed RNA polymerase subunit beta.